The primary structure comprises 737 residues: Glycogen [starch] synthase, muscle (737 aa).

Serine 8 carries the post-translational modification Phosphoserine; by AMPK and PKA. Phosphoserine is present on serine 11. Lysine 39 lines the UDP pocket. 2 residues coordinate UDP-alpha-D-glucose: histidine 205 and arginine 211. Positions 291, 292, 294, 297, and 301 each coordinate alpha-D-glucose 6-phosphate. UDP is bound at residue arginine 331. Residue arginine 331 coordinates UDP-alpha-D-glucose. Serine 412 bears the Phosphoserine mark. Position 501 (histidine 501) interacts with alpha-D-glucose 6-phosphate. Residues glutamate 510, tryptophan 512, and glycine 513 each coordinate UDP-alpha-D-glucose. Threonine 515 contacts UDP. The alpha-D-glucose 6-phosphate site is built by arginine 582 and arginine 586. Positions 634–737 (YRYPRPASVP…PTSSLGEERN (104 aa)) are disordered. Serine 641 bears the Phosphoserine; by DYRK2, GSK3-alpha, GSK3-beta and PASK mark. Serine 645 and serine 649 each carry phosphoserine; by GSK3-alpha and GSK3-beta. Serine 652 is modified (phosphoserine). At serine 653 the chain carries Phosphoserine; by GSK3-alpha and GSK3-beta. Serine 657 is modified (phosphoserine; by CK2). Residues 658-681 (EDEEDPRNGPLEEDSERYDEDEEA) are compositionally biased toward acidic residues. At serine 672 the chain carries Phosphoserine. Basic and acidic residues predominate over residues 682 to 695 (AKDRRNIRAPEWPR). Serine 698 bears the Phosphoserine mark. The segment covering 698-714 (SCTSSTSGSKRNSVDTA) has biased composition (polar residues). The residue at position 700 (threonine 700) is a Phosphothreonine. Serine 710 is modified (phosphoserine). Residues 715 to 737 (TSSSLSTPSEPLSPTSSLGEERN) show a composition bias toward low complexity. A Phosphothreonine modification is found at threonine 721. 2 positions are modified to phosphoserine: serine 727 and serine 731.

The protein belongs to the glycosyltransferase 3 family. In terms of assembly, part of the GYS1-GYG1 complex, a heterooctamer composed of a tetramer of GYS1 and 2 dimers of GYG1, where each GYS1 protomer binds to one GYG1 subunit (via GYG1 C-terminus); the GYS1 tetramer may dissociate from GYG1 dimers to continue glycogen polymerization on its own. In terms of processing, phosphorylation at Ser-8 by AMPK inactivates the enzyme activity. Primed phosphorylation at Ser-657 (site 5) by CSNK2A1 and CSNK2A2 is required for inhibitory phosphorylation at Ser-641 (site 3a), Ser-645 (site 3b), Ser-649 (site 3c) and Ser-653 (site 4) by GSK3A an GSK3B. Phosphorylated at Ser-641 by PASK, leading to inactivation; phosphorylation by PASK is inhibited by glycogen. Phosphorylated at Ser-641 by DYRK2, leading to inactivation. Dephosphorylation at Ser-641 and Ser-645 by PP1 activates the enzyme.

The enzyme catalyses [(1-&gt;4)-alpha-D-glucosyl](n) + UDP-alpha-D-glucose = [(1-&gt;4)-alpha-D-glucosyl](n+1) + UDP + H(+). It functions in the pathway glycan biosynthesis; glycogen biosynthesis. With respect to regulation, allosteric activation by glucose-6-phosphate. Phosphorylation reduces the activity towards UDP-glucose. When in the non-phosphorylated state, glycogen synthase does not require glucose-6-phosphate as an allosteric activator; when phosphorylated it does. Functionally, glycogen synthase participates in the glycogen biosynthetic process along with glycogenin and glycogen branching enzyme. Extends the primer composed of a few glucose units formed by glycogenin by adding new glucose units to it. In this context, glycogen synthase transfers the glycosyl residue from UDP-Glc to the non-reducing end of alpha-1,4-glucan. The chain is Glycogen [starch] synthase, muscle (GYS1) from Macaca mulatta (Rhesus macaque).